A 428-amino-acid chain; its full sequence is GTPase Obg (428 aa).

The region spanning 1-158 (MFVDQVKIYV…RDVILELKVL (158 aa)) is the Obg domain. The 171-residue stretch at 159–329 (ADVGLVGFPS…LLFEVANLLE (171 aa)) folds into the OBG-type G domain. GTP-binding positions include 165–172 (GFPSVGKS), 190–194 (FTTIV), 212–215 (DLPG), 282–285 (NKMD), and 310–312 (SAV). Mg(2+) contacts are provided by Ser172 and Thr192. The region spanning 350–428 (KLETEGVKFD…ILEYEFEFID (79 aa)) is the OCT domain.

It belongs to the TRAFAC class OBG-HflX-like GTPase superfamily. OBG GTPase family. In terms of assembly, monomer. It depends on Mg(2+) as a cofactor.

It is found in the cytoplasm. In terms of biological role, an essential GTPase which binds GTP, GDP and possibly (p)ppGpp with moderate affinity, with high nucleotide exchange rates and a fairly low GTP hydrolysis rate. Plays a role in control of the cell cycle, stress response, ribosome biogenesis and in those bacteria that undergo differentiation, in morphogenesis control. The sequence is that of GTPase Obg from Bacillus cereus (strain Q1).